Reading from the N-terminus, the 20-residue chain is Major extrapallial fluid protein (20 aa).

Residues 1–20 (NPVDDHHDDHHDAPIVEHHD) are disordered.

Homodimer. Post-translationally, glycosylated.

Appears to be a building block of the soluble organic matrix of the shell. The protein binds calcium. This Mytilus edulis (Blue mussel) protein is Major extrapallial fluid protein.